Consider the following 235-residue polypeptide: Pyridoxine 5'-phosphate synthase (235 aa).

N6 contacts 3-amino-2-oxopropyl phosphate. A 1-deoxy-D-xylulose 5-phosphate-binding site is contributed by 8–9 (DH). R17 contributes to the 3-amino-2-oxopropyl phosphate binding site. H42 acts as the Proton acceptor in catalysis. Positions 44 and 49 each coordinate 1-deoxy-D-xylulose 5-phosphate. The active-site Proton acceptor is the E69. 1-deoxy-D-xylulose 5-phosphate is bound at residue T99. H188 functions as the Proton donor in the catalytic mechanism. 3-amino-2-oxopropyl phosphate contacts are provided by residues G189 and 210 to 211 (GH).

Belongs to the PNP synthase family. Homooctamer; tetramer of dimers.

The protein localises to the cytoplasm. It catalyses the reaction 3-amino-2-oxopropyl phosphate + 1-deoxy-D-xylulose 5-phosphate = pyridoxine 5'-phosphate + phosphate + 2 H2O + H(+). It functions in the pathway cofactor biosynthesis; pyridoxine 5'-phosphate biosynthesis; pyridoxine 5'-phosphate from D-erythrose 4-phosphate: step 5/5. Functionally, catalyzes the complicated ring closure reaction between the two acyclic compounds 1-deoxy-D-xylulose-5-phosphate (DXP) and 3-amino-2-oxopropyl phosphate (1-amino-acetone-3-phosphate or AAP) to form pyridoxine 5'-phosphate (PNP) and inorganic phosphate. This chain is Pyridoxine 5'-phosphate synthase, found in Wolbachia sp. subsp. Drosophila simulans (strain wRi).